Consider the following 204-residue polypeptide: CASP-like protein 3A1 (204 aa).

The Cytoplasmic portion of the chain corresponds to 1–39 (MGSIGNGRNGSEVGIQIPAMGNKEVLERPAIPRWPRLGV). The chain crosses the membrane as a helical span at residues 40 to 60 (VMVATRAVALVMAVLSMALMI). Residues 61–88 (SAKQRGSLKIFGIEIPLYANWSFSDSLE) are Extracellular-facing. N-linked (GlcNAc...) asparagine glycosylation occurs at N80. A helical transmembrane segment spans residues 89–109 (YLVGMSAVSAAYCLAQLLLTA). Topologically, residues 110–124 (HKAVKNAPVVQSRNY) are cytoplasmic. A helical transmembrane segment spans residues 125–145 (AWLLFTGDQIFAYAMMSAGSA). Over 146–179 (AAAVANLNRTGIRHTALPNFCKPLPRFCDLSAAS) the chain is Extracellular. N153 is a glycosylation site (N-linked (GlcNAc...) asparagine). A helical membrane pass occupies residues 180 to 200 (IACAFLSCIFLAASAVIDVIW). Topologically, residues 201–204 (LSNM) are cytoplasmic.

It belongs to the Casparian strip membrane proteins (CASP) family. Homodimer and heterodimers.

It localises to the cell membrane. The sequence is that of CASP-like protein 3A1 from Oryza sativa subsp. indica (Rice).